Here is a 236-residue protein sequence, read N- to C-terminus: Thrombin-like enzyme kangshuanmei (236 aa).

The Peptidase S1 domain occupies valine 1–alanine 227. 6 disulfides stabilise this stretch: cysteine 7–cysteine 141, cysteine 28–cysteine 44, cysteine 78–cysteine 234, cysteine 120–cysteine 188, cysteine 152–cysteine 167, and cysteine 178–cysteine 203. Histidine 43 acts as the Charge relay system in catalysis. A glycan (N-linked (GlcNAc...) asparagine) is linked at asparagine 81. The active-site Charge relay system is aspartate 88. N-linked (GlcNAc...) asparagine glycosylation is found at asparagine 99 and asparagine 148. The active-site Charge relay system is the serine 182. Residue asparagine 229 is glycosylated (N-linked (GlcNAc...) asparagine).

The protein belongs to the peptidase S1 family. Snake venom subfamily. In terms of assembly, monomer. N-glycosylated by units composed of Fuc, Man, GlcNAc, Gal and NeuAC residues. As to expression, expressed by the venom gland.

The protein resides in the secreted. Its activity is regulated as follows. Inhibited by 4-(2-aminoethyl)-benzensulfonyl fluoride. Not inhibited by antithrombin-III. In terms of biological role, thrombin-like snake venom serine protease. Cleaves bonds after Arg and Lys, converts fibrinogen (FGA and FGB) to fibrin and releases both fibrinopeptides A and B, and fibrinogen peptide Bbeta1-42. Has a blood clotting activity. In Gloydius brevicauda (Korean slamosa snake), this protein is Thrombin-like enzyme kangshuanmei.